We begin with the raw amino-acid sequence, 284 residues long: 4-hydroxy-3-methylbut-2-enyl diphosphate reductase (284 aa).

Cysteine 12 serves as a coordination point for [4Fe-4S] cluster. (2E)-4-hydroxy-3-methylbut-2-enyl diphosphate contacts are provided by histidine 40 and histidine 72. Positions 40 and 72 each coordinate dimethylallyl diphosphate. Histidine 40 and histidine 72 together coordinate isopentenyl diphosphate. Residue cysteine 94 participates in [4Fe-4S] cluster binding. Residue histidine 122 participates in (2E)-4-hydroxy-3-methylbut-2-enyl diphosphate binding. Histidine 122 provides a ligand contact to dimethylallyl diphosphate. Histidine 122 is an isopentenyl diphosphate binding site. Glutamate 124 serves as the catalytic Proton donor. A (2E)-4-hydroxy-3-methylbut-2-enyl diphosphate-binding site is contributed by threonine 161. Position 193 (cysteine 193) interacts with [4Fe-4S] cluster. The (2E)-4-hydroxy-3-methylbut-2-enyl diphosphate site is built by serine 221, asparagine 223, and serine 264. The dimethylallyl diphosphate site is built by serine 221, asparagine 223, and serine 264. Residues serine 221, asparagine 223, and serine 264 each coordinate isopentenyl diphosphate.

The protein belongs to the IspH family. Requires [4Fe-4S] cluster as cofactor.

It catalyses the reaction isopentenyl diphosphate + 2 oxidized [2Fe-2S]-[ferredoxin] + H2O = (2E)-4-hydroxy-3-methylbut-2-enyl diphosphate + 2 reduced [2Fe-2S]-[ferredoxin] + 2 H(+). The enzyme catalyses dimethylallyl diphosphate + 2 oxidized [2Fe-2S]-[ferredoxin] + H2O = (2E)-4-hydroxy-3-methylbut-2-enyl diphosphate + 2 reduced [2Fe-2S]-[ferredoxin] + 2 H(+). Its pathway is isoprenoid biosynthesis; dimethylallyl diphosphate biosynthesis; dimethylallyl diphosphate from (2E)-4-hydroxy-3-methylbutenyl diphosphate: step 1/1. The protein operates within isoprenoid biosynthesis; isopentenyl diphosphate biosynthesis via DXP pathway; isopentenyl diphosphate from 1-deoxy-D-xylulose 5-phosphate: step 6/6. Catalyzes the conversion of 1-hydroxy-2-methyl-2-(E)-butenyl 4-diphosphate (HMBPP) into a mixture of isopentenyl diphosphate (IPP) and dimethylallyl diphosphate (DMAPP). Acts in the terminal step of the DOXP/MEP pathway for isoprenoid precursor biosynthesis. The polypeptide is 4-hydroxy-3-methylbut-2-enyl diphosphate reductase (Dehalococcoides mccartyi (strain CBDB1)).